A 475-amino-acid chain; its full sequence is 3-isopropylmalate dehydratase large subunit (475 aa).

[4Fe-4S] cluster is bound by residues Cys349, Cys409, and Cys412.

It belongs to the aconitase/IPM isomerase family. LeuC type 1 subfamily. As to quaternary structure, heterodimer of LeuC and LeuD. The cofactor is [4Fe-4S] cluster.

It catalyses the reaction (2R,3S)-3-isopropylmalate = (2S)-2-isopropylmalate. The protein operates within amino-acid biosynthesis; L-leucine biosynthesis; L-leucine from 3-methyl-2-oxobutanoate: step 2/4. Its function is as follows. Catalyzes the isomerization between 2-isopropylmalate and 3-isopropylmalate, via the formation of 2-isopropylmaleate. The chain is 3-isopropylmalate dehydratase large subunit from Cereibacter sphaeroides (strain ATCC 17029 / ATH 2.4.9) (Rhodobacter sphaeroides).